A 155-amino-acid chain; its full sequence is Transcriptional repressor NrdR (155 aa).

A zinc finger spans residues 3–34 (CPYCGHLEDRVVDSRETQDGQATRRRRACLSC). The region spanning 49–139 (PQVVKKDGRR…VYRAFRDVGE (91 aa)) is the ATP-cone domain.

It belongs to the NrdR family. It depends on Zn(2+) as a cofactor.

Its function is as follows. Negatively regulates transcription of bacterial ribonucleotide reductase nrd genes and operons by binding to NrdR-boxes. The polypeptide is Transcriptional repressor NrdR (Anaeromyxobacter sp. (strain K)).